We begin with the raw amino-acid sequence, 104 residues long: Urease subunit beta (104 aa).

It belongs to the urease beta subunit family. As to quaternary structure, heterotrimer of UreA (gamma), UreB (beta) and UreC (alpha) subunits. Three heterotrimers associate to form the active enzyme.

Its subcellular location is the cytoplasm. It catalyses the reaction urea + 2 H2O + H(+) = hydrogencarbonate + 2 NH4(+). Its pathway is nitrogen metabolism; urea degradation; CO(2) and NH(3) from urea (urease route): step 1/1. In Methylocella silvestris (strain DSM 15510 / CIP 108128 / LMG 27833 / NCIMB 13906 / BL2), this protein is Urease subunit beta.